The chain runs to 151 residues: D-aminoacyl-tRNA deacylase (151 aa).

Residues 137–138 carry the Gly-cisPro motif, important for rejection of L-amino acids motif; sequence GP.

The protein belongs to the DTD family. Homodimer.

It localises to the cytoplasm. It catalyses the reaction glycyl-tRNA(Ala) + H2O = tRNA(Ala) + glycine + H(+). The catalysed reaction is a D-aminoacyl-tRNA + H2O = a tRNA + a D-alpha-amino acid + H(+). Functionally, an aminoacyl-tRNA editing enzyme that deacylates mischarged D-aminoacyl-tRNAs. Also deacylates mischarged glycyl-tRNA(Ala), protecting cells against glycine mischarging by AlaRS. Acts via tRNA-based rather than protein-based catalysis; rejects L-amino acids rather than detecting D-amino acids in the active site. By recycling D-aminoacyl-tRNA to D-amino acids and free tRNA molecules, this enzyme counteracts the toxicity associated with the formation of D-aminoacyl-tRNA entities in vivo and helps enforce protein L-homochirality. The chain is D-aminoacyl-tRNA deacylase from Listeria monocytogenes serotype 4a (strain HCC23).